Consider the following 138-residue polypeptide: Transmembrane protein 170A (138 aa).

Residues 1-44 (MEGSEAGGGGLLQQILSLRLVPRVGNGTTYSSPLSTFPEMWYGV) are Lumenal-facing. Asparagine 26 is a glycosylation site (N-linked (GlcNAc...) asparagine). The chain crosses the membrane as a helical span at residues 45 to 65 (FLWALVSSLSFHVPAALLALF). At 66 to 79 (TLRHHKYGRFMSVS) the chain is on the cytoplasmic side. Residues 80–100 (LLLMGIVGPITAGILTSAAIA) form a helical membrane-spanning segment. The Lumenal segment spans residues 101–110 (GVYRAAGKKM). A helical transmembrane segment spans residues 111–131 (IPFEALIFEVGQTFCVVVVSF). Over 132–138 (LRILATL) the chain is Cytoplasmic.

This sequence belongs to the TMEM170 family.

The protein resides in the endoplasmic reticulum membrane. Its subcellular location is the nucleus envelope. Its function is as follows. May regulate membrane morphogenesis in the endoplasmic reticulum (ER) by promoting ER sheet formation at the expense of ER tubules. The polypeptide is Transmembrane protein 170A (TMEM170A) (Gallus gallus (Chicken)).